The chain runs to 818 residues: Protein LDB19 (818 aa).

Positions 1-25 (MAFSRLTSTHQSNHNGYSNSNKKGQ) are disordered. T93 bears the Phosphothreonine mark. The span at 352–361 (QVKIKESEKS) shows a compositional bias: basic and acidic residues. The tract at residues 352–374 (QVKIKESEKSKKPRSHIKRYGEL) is disordered. S384 carries the phosphoserine modification. Positions 388 to 436 (MPSQRLPGEPGREQAPNSSGPASTGNVGLDDENPVNEDEEDQPGSEFIH) are disordered. Over residues 402–413 (APNSSGPASTGN) the composition is skewed to polar residues. Residues 416 to 430 (LDDENPVNEDEEDQP) are compositionally biased toward acidic residues. A Glycyl lysine isopeptide (Lys-Gly) (interchain with G-Cter in ubiquitin) cross-link involves residue K486. 2 disordered regions span residues 568 to 590 (QPIR…NVHN) and 607 to 644 (TPKV…NSNI). T619 is subject to Phosphothreonine. The span at 620–629 (PVNSNKSNHS) shows a compositional bias: polar residues. S808 carries the phosphoserine modification.

The protein belongs to the LDB19 family.

It localises to the cytoplasm. The protein localises to the golgi apparatus. In terms of biological role, may be involved in protein-linked oligosaccharide phosphorylation since the deletion reduces the negative charge of the cell surface. Involved in the resistance to EDTA, cadmium chloride, cycloheximide, 6-dimethylaminopurine, methyl caffeate, beta-chloro-L-alanine, caffeine and cerulenin. In Saccharomyces cerevisiae (strain ATCC 204508 / S288c) (Baker's yeast), this protein is Protein LDB19 (LDB19).